The chain runs to 183 residues: Adenine phosphoribosyltransferase (183 aa).

The protein belongs to the purine/pyrimidine phosphoribosyltransferase family. Homodimer.

The protein resides in the cytoplasm. It carries out the reaction AMP + diphosphate = 5-phospho-alpha-D-ribose 1-diphosphate + adenine. It functions in the pathway purine metabolism; AMP biosynthesis via salvage pathway; AMP from adenine: step 1/1. Functionally, catalyzes a salvage reaction resulting in the formation of AMP, that is energically less costly than de novo synthesis. In Klebsiella pneumoniae subsp. pneumoniae (strain ATCC 700721 / MGH 78578), this protein is Adenine phosphoribosyltransferase.